The chain runs to 188 residues: Elongation factor P (188 aa).

K34 carries the N6-(3,6-diaminohexanoyl)-5-hydroxylysine modification.

The protein belongs to the elongation factor P family. May be beta-lysylated on the epsilon-amino group of Lys-34 by the combined action of EpmA and EpmB, and then hydroxylated on the C5 position of the same residue by EpmC (if this protein is present). Lysylation is critical for the stimulatory effect of EF-P on peptide-bond formation. The lysylation moiety may extend toward the peptidyltransferase center and stabilize the terminal 3-CCA end of the tRNA. Hydroxylation of the C5 position on Lys-34 may allow additional potential stabilizing hydrogen-bond interactions with the P-tRNA.

It localises to the cytoplasm. The protein operates within protein biosynthesis; polypeptide chain elongation. Functionally, involved in peptide bond synthesis. Alleviates ribosome stalling that occurs when 3 or more consecutive Pro residues or the sequence PPG is present in a protein, possibly by augmenting the peptidyl transferase activity of the ribosome. Modification of Lys-34 is required for alleviation. The chain is Elongation factor P from Vibrio atlanticus (strain LGP32) (Vibrio splendidus (strain Mel32)).